A 249-amino-acid chain; its full sequence is Meiotic drive suppressor wtf25 (249 aa).

The interval 1–40 (MKNNYTSLKSPLDEEDELKTDHEIDLEKGPLPEYDSEEEG) is disordered. The span at 19–30 (KTDHEIDLEKGP) shows a compositional bias: basic and acidic residues. Helical transmembrane passes span 73 to 93 (LLIILLISFTSIILFNAPAFC), 110 to 130 (WTLFGFWCLVCTLALIFLTYF), 151 to 170 (NMIFAFCKSSLFCLVLLKAE), and 187 to 207 (SASAFTFMAVSSILIFIAETV).

The protein belongs to the WTF family. As to quaternary structure, homomer. Interacts with other proteins that exhibit high sequence similarity.

It localises to the spore membrane. Its subcellular location is the vacuole membrane. Acts as a suppressor component of the dual wtf meiotic drive system, and can suppress but not confer meiotic drive by compatible poisons. Wtf meiotic drive systems promote unequal transmission of alleles from the parental zygote to progeny spores by encoding a poison and an antidote from the same locus; the poison is trans-acting and forms toxic aggregates in all spores within an ascus, wherease the antidote is spore-specific and targets aggregates for degradation by the vacuole. Meiotic drive by wtf systems therefore lead to poisoning of all progeny that do not inherit the dual poison/antidote allele, or express a compatible antidote. The chain is Meiotic drive suppressor wtf25 from Schizosaccharomyces pombe (strain 972 / ATCC 24843) (Fission yeast).